Reading from the N-terminus, the 366-residue chain is Reticulon-4-interacting protein 1, mitochondrial (366 aa).

A mitochondrion-targeting transit peptide spans 1-20; sequence MIEKMILRRFFSTKSSTMRA.

The protein belongs to the zinc-containing alcohol dehydrogenase family. Quinone oxidoreductase subfamily. In terms of tissue distribution, expressed in pharynx, muscles and intestine.

It is found in the mitochondrion. In terms of biological role, plays a role in oxygen metabolism in the mitochondria by regulating the levels of reactive oxygen species (ROS) thereby conferring resistance to oxidative stress. Involved in resistance to P.aeruginosa PA14 infection. Regulates lifespan. The chain is Reticulon-4-interacting protein 1, mitochondrial from Caenorhabditis elegans.